We begin with the raw amino-acid sequence, 395 residues long: Multidrug resistance protein MdtL (395 aa).

12 consecutive transmembrane segments (helical) span residues Phe4 to Val24, Ile42 to Ala62, Pro69 to Ser89, Leu93 to Phe113, Leu131 to Met151, Ser158 to Leu178, Val217 to Phe237, Ala247 to Phe267, Thr271 to His291, Val295 to Met315, Val328 to Ile350, and Ala355 to Val377.

The protein belongs to the major facilitator superfamily. DHA1 family. MdtL (TC 2.A.1.2.22) subfamily.

Its subcellular location is the cell inner membrane. The sequence is that of Multidrug resistance protein MdtL from Salmonella schwarzengrund (strain CVM19633).